The sequence spans 437 residues: MQLPWWWELGDPCAWTGQGRGTRRMSPATTGTFLLTVYTIFSKVHSDRNVYPSAGVLFVHVLEREYFKGEFPPYPKPGEISNDPITFNTNLMGYPDRPGWLRYIQRTPYSDGVLYGSPTAENVGKPTVIEITAYNRRTFETARHNLIINIMSAEDFPLPYQAEFFIKNMNVEEMLASEVLGDFLGAVKNVWQPERLNAINITSALDRGGRVPLPINDMKEGVYVMVGADVPFSSCLREVENPQNQLRCSQEMEPVITCDKKFRTQFYIDWCKISLVDKTKQVSTYQEVIRGEGILPDGGEYKPPSDSLKSRDYYTDFLVTLAVPSAVALVLFLILAYIMCCRREGVEKRNMQTPDIQLVHHSAIQKSTKELRDMSKNREIAWPLSTLPVFHPVTGEIIPPLHTDNYESTNMPLMQTQQNLPHQTQIPQQQTTGKWYS.

Residues 1-317 are Extracellular-facing; it reads MQLPWWWELG…LKSRDYYTDF (317 aa). N-linked (GlcNAc...) asparagine glycosylation is present at Asn-200. A helical transmembrane segment spans residues 318–338; it reads LVTLAVPSAVALVLFLILAYI. The Cytoplasmic portion of the chain corresponds to 339–437; it reads MCCRREGVEK…QQQTTGKWYS (99 aa). The segment at 418-437 is disordered; sequence QNLPHQTQIPQQQTTGKWYS.

This sequence belongs to the sarcoglycan alpha/epsilon family. Post-translationally, N-glycosylated. In terms of processing, ubiquitinated, leading to its degradation by the proteasome.

It is found in the cell membrane. It localises to the sarcolemma. The protein localises to the cytoplasm. Its subcellular location is the cytoskeleton. The protein resides in the cell projection. It is found in the dendrite. It localises to the golgi apparatus. Its function is as follows. Component of the sarcoglycan complex, a subcomplex of the dystrophin-glycoprotein complex which forms a link between the F-actin cytoskeleton and the extracellular matrix. This is Epsilon-sarcoglycan (SGCE) from Bos taurus (Bovine).